A 631-amino-acid chain; its full sequence is E3 ubiquitin-protein ligase Zswim2 (631 aa).

Residues 54–87 (FRVLLGNPHECSCPTFLKRGELCKHICWVLLKKF) form an SWIM-type zinc finger. Positions 139-348 (KDINAGDICP…APGYQCRLCL (210 aa)) are UBE2D1-binding. An RING-type 1 zinc finger spans residues 147–199 (CPICQEVLLEKKLPVTFCRFGCGNNVHIKCMRILANYQDTGSDSSVLRCPLCR). The ZZ-type zinc-finger motif lies at 230–281 (HLGIPCNNCNQLPIEGRCYKCTECVEYHLCQECFDSCCHSSHAFASREKRNQ). Zn(2+) is bound by residues Cys-235, Cys-238, Cys-250, Cys-253, Cys-259, Cys-262, His-268, and His-271. An RING-type 2 zinc finger spans residues 344–386 (CRLCLKSFSFGQYTRLLPCTHKFHRKCIDNWLLHKCNSCPIDR). Residues 589–614 (SKRQNNSMGKVRQKLGHPPRRPAYPP) are disordered. The span at 599–608 (VRQKLGHPPR) shows a compositional bias: basic residues.

In terms of assembly, dimer. Interacts with UBE2D1. Polyubiquitinated. Polyubiquitination is followed by degradation via the proteasome. As to expression, expressed only in testis.

It carries out the reaction S-ubiquitinyl-[E2 ubiquitin-conjugating enzyme]-L-cysteine + [acceptor protein]-L-lysine = [E2 ubiquitin-conjugating enzyme]-L-cysteine + N(6)-ubiquitinyl-[acceptor protein]-L-lysine.. Its function is as follows. E3 ubiquitin-protein ligase involved in the regulation of Fas-, DR3- and DR4-mediated apoptosis. Functions in conjunction with the UBE2D1, UBE2D3 and UBE2E1 E2 ubiquitin-conjugating enzymes. This Mus musculus (Mouse) protein is E3 ubiquitin-protein ligase Zswim2 (Zswim2).